Reading from the N-terminus, the 626-residue chain is Colicin-Ib (626 aa).

Residues 276–286 (QQLTQQKNTPD) show a composition bias toward polar residues. The segment at 276–308 (QQLTQQKNTPDGKTIVSPEKFPGRSSTNHSIVV) is disordered. A helical membrane pass occupies residues 588–612 (FSVMLGTPVGILGFAIIMAAVSALV).

The protein belongs to the channel forming colicin family.

Its subcellular location is the host membrane. This colicin is a channel-forming colicin. This class of transmembrane toxins depolarize the cytoplasmic membrane, leading to dissipation of cellular energy. Its function is as follows. Colicins are polypeptide toxins produced by and active against E.coli and closely related bacteria. The sequence is that of Colicin-Ib (cib) from Escherichia coli.